A 273-amino-acid chain; its full sequence is MSQLSTIIEQAFENRANFTAADCPADIRQAVEEALSGLDNGTLRVAEKIDGEWIVHQWLKKAVLLSFKLNDNKPIESGDLAFYDKVDTKFAGWTEEQFKEAGVRVVPPAVARRGSYQAKNVVLMPSYVNIGAYVDENTMVDTWATVGSCAQIGKNVHLSGGVGIGGVLEPLQANPTIIEDNCFIGARSEIVEGVIVEEGAVISMGVYIGQSTRIYDRETGEIHYGRVPAGSVVVPGSLPSKDGKYSLYAAIIVKKVDAQTRAKTSLNDLLRAD.

Substrate-binding residues include Arg104 and Asp141.

Belongs to the transferase hexapeptide repeat family. As to quaternary structure, homotrimer.

The protein resides in the cytoplasm. It carries out the reaction (S)-2,3,4,5-tetrahydrodipicolinate + succinyl-CoA + H2O = (S)-2-succinylamino-6-oxoheptanedioate + CoA. It participates in amino-acid biosynthesis; L-lysine biosynthesis via DAP pathway; LL-2,6-diaminopimelate from (S)-tetrahydrodipicolinate (succinylase route): step 1/3. In Acinetobacter baylyi (strain ATCC 33305 / BD413 / ADP1), this protein is 2,3,4,5-tetrahydropyridine-2,6-dicarboxylate N-succinyltransferase.